Here is a 529-residue protein sequence, read N- to C-terminus: Zinc finger CCCH domain-containing protein 65 (529 aa).

Residues 1 to 10 (MADADARAPP) show a composition bias toward basic and acidic residues. Disordered stretches follow at residues 1–36 (MADADARAPPKSDPGATPIGSISPSSAAPAAGEDEV) and 134–179 (PARK…GSYV). Over residues 14–31 (PGATPIGSISPSSAAPAA) the composition is skewed to low complexity. 3 consecutive C3H1-type zinc fingers follow at residues 108–136 (RPGEPDCTYYVKFGSCRFGMKCKFNHPAR), 237–265 (GSSQEECKYYSTPGGCKFGKACKYLHRDG), and 285–313 (RPGEKECPYYMRTGSCKYATNCKFHHPDP). Residues 313-347 (PSNVASKDPQLEHENGDAPQQDVQGSSSQPNASIW) are disordered. Residues 333–344 (QDVQGSSSQPNA) are compositionally biased toward polar residues. 2 C3H1-type zinc fingers span residues 433–461 (RPGQPECQHFVKSGFCKFRMKCKYHHPRS) and 477–505 (KPDQPVCTYYGRYGVCKFGPACAYNHPFN).

This Oryza sativa subsp. japonica (Rice) protein is Zinc finger CCCH domain-containing protein 65.